The primary structure comprises 88 residues: Small ribosomal subunit protein uS15 (88 aa).

Belongs to the universal ribosomal protein uS15 family. Part of the 30S ribosomal subunit. Forms a bridge to the 50S subunit in the 70S ribosome, contacting the 23S rRNA.

Functionally, one of the primary rRNA binding proteins, it binds directly to 16S rRNA where it helps nucleate assembly of the platform of the 30S subunit by binding and bridging several RNA helices of the 16S rRNA. In terms of biological role, forms an intersubunit bridge (bridge B4) with the 23S rRNA of the 50S subunit in the ribosome. This chain is Small ribosomal subunit protein uS15, found in Geobacter sp. (strain M21).